Consider the following 1379-residue polypeptide: DNA-directed RNA polymerase subunit beta (1379 aa).

The protein belongs to the RNA polymerase beta chain family. As to quaternary structure, the RNAP catalytic core consists of 2 alpha, 1 beta, 1 beta' and 1 omega subunit. When a sigma factor is associated with the core the holoenzyme is formed, which can initiate transcription.

It catalyses the reaction RNA(n) + a ribonucleoside 5'-triphosphate = RNA(n+1) + diphosphate. Functionally, DNA-dependent RNA polymerase catalyzes the transcription of DNA into RNA using the four ribonucleoside triphosphates as substrates. This is DNA-directed RNA polymerase subunit beta from Rhizobium johnstonii (strain DSM 114642 / LMG 32736 / 3841) (Rhizobium leguminosarum bv. viciae).